Reading from the N-terminus, the 195-residue chain is UPF0157 protein BH1888 (195 aa).

Polar residues predominate over residues 1–12 (MPPMKDSSNSTP). The disordered stretch occupies residues 1 to 21 (MPPMKDSSNSTPRTDEELQEV).

Belongs to the UPF0157 (GrpB) family.

This Halalkalibacterium halodurans (strain ATCC BAA-125 / DSM 18197 / FERM 7344 / JCM 9153 / C-125) (Bacillus halodurans) protein is UPF0157 protein BH1888.